Reading from the N-terminus, the 604-residue chain is Netrin-1 (604 aa).

An N-terminal signal peptide occupies residues 1 to 24; that stretch reads MMRAVWEALAALAAVACLVGAVRG. One can recognise a Laminin N-terminal domain in the interval 47 to 284; that stretch reads HPRRCIPDFV…AVSDLQVGGR (238 aa). Residues asparagine 95, asparagine 116, and asparagine 131 are each glycosylated (N-linked (GlcNAc...) asparagine). Disulfide bonds link cysteine 119/cysteine 152, cysteine 285/cysteine 294, cysteine 287/cysteine 304, cysteine 306/cysteine 315, cysteine 318/cysteine 338, cysteine 341/cysteine 350, cysteine 343/cysteine 368, cysteine 371/cysteine 380, cysteine 383/cysteine 401, cysteine 404/cysteine 416, cysteine 406/cysteine 423, cysteine 425/cysteine 434, cysteine 437/cysteine 451, cysteine 472/residue 544, and cysteine 491/cysteine 601. 3 consecutive Laminin EGF-like domains span residues 285 to 340, 341 to 403, and 404 to 453; these read CKCN…ECVA, CNCN…ACKA, and CDCH…PCIK. N-linked (GlcNAc...) asparagine glycosylation is present at asparagine 417. Positions 472–601 constitute an NTR domain; that stretch reads CDSYCKASKG…FQQREKKGKC (130 aa). The Cell attachment site motif lies at 530 to 532; the sequence is RGD.

As to quaternary structure, binds to its receptors; DCC, UNC5A, UNC5B, UNC5C and probably UNC5D. Binds to its receptor; DSCAM. Interacts with APP.

The protein resides in the secreted. Its subcellular location is the cytoplasm. Functionally, netrins control guidance of CNS commissural axons and peripheral motor axons. Its association with either DCC or some UNC5 receptors will lead to axon attraction or repulsion, respectively. Binding to UNC5C might cause dissociation of UNC5C from polymerized TUBB3 in microtubules and thereby lead to increased microtubule dynamics and axon repulsion. Involved in dorsal root ganglion axon projection towards the spinal cord. It also serves as a survival factor via its association with its receptors which prevent the initiation of apoptosis. Involved in colorectal tumorigenesis by regulating apoptosis. The polypeptide is Netrin-1 (Ntn1) (Rattus norvegicus (Rat)).